The sequence spans 437 residues: GTPase Der (437 aa).

EngA-type G domains are found at residues 3–167 and 176–352; these read NLVA…KKES and PRFA…ENRM. GTP-binding positions include 9 to 16, 56 to 60, 119 to 122, 182 to 189, 229 to 233, and 294 to 297; these read GRPNVGKS, DTGGW, NKTD, GRPNAGKS, DTAGI, and NKWD. One can recognise a KH-like domain in the interval 353-437; the sequence is IKIPTARLNE…TPINIYIRQK (85 aa).

The protein belongs to the TRAFAC class TrmE-Era-EngA-EngB-Septin-like GTPase superfamily. EngA (Der) GTPase family. As to quaternary structure, associates with the 50S ribosomal subunit.

In terms of biological role, GTPase that plays an essential role in the late steps of ribosome biogenesis. In Bacteroides fragilis (strain ATCC 25285 / DSM 2151 / CCUG 4856 / JCM 11019 / LMG 10263 / NCTC 9343 / Onslow / VPI 2553 / EN-2), this protein is GTPase Der.